The following is a 212-amino-acid chain: Small ribosomal subunit protein eS6 (212 aa).

This sequence belongs to the eukaryotic ribosomal protein eS6 family.

The sequence is that of Small ribosomal subunit protein eS6 from Metallosphaera sedula (strain ATCC 51363 / DSM 5348 / JCM 9185 / NBRC 15509 / TH2).